The primary structure comprises 287 residues: Glutamate racemase (287 aa).

Substrate contacts are provided by residues 32–33 and 64–65; these read DS and YG. Cys-96 serves as the catalytic Proton donor/acceptor. Position 97–98 (97–98) interacts with substrate; sequence NT. Residue Cys-208 is the Proton donor/acceptor of the active site. Position 209 to 210 (209 to 210) interacts with substrate; sequence TH.

It belongs to the aspartate/glutamate racemases family.

It carries out the reaction L-glutamate = D-glutamate. Its pathway is cell wall biogenesis; peptidoglycan biosynthesis. Its function is as follows. Provides the (R)-glutamate required for cell wall biosynthesis. This is Glutamate racemase from Photorhabdus laumondii subsp. laumondii (strain DSM 15139 / CIP 105565 / TT01) (Photorhabdus luminescens subsp. laumondii).